Consider the following 128-residue polypeptide: Ribosome-binding factor A (128 aa).

Belongs to the RbfA family. Monomer. Binds 30S ribosomal subunits, but not 50S ribosomal subunits or 70S ribosomes.

The protein resides in the cytoplasm. Its function is as follows. One of several proteins that assist in the late maturation steps of the functional core of the 30S ribosomal subunit. Associates with free 30S ribosomal subunits (but not with 30S subunits that are part of 70S ribosomes or polysomes). Required for efficient processing of 16S rRNA. May interact with the 5'-terminal helix region of 16S rRNA. The protein is Ribosome-binding factor A of Herminiimonas arsenicoxydans.